We begin with the raw amino-acid sequence, 184 residues long: Ribulose bisphosphate carboxylase small subunit, chloroplastic 2 (184 aa).

A chloroplast-targeting transit peptide spans 1-59 (MASSMMSNAATAVAVAATSGGAQANMVAPFNGLKSIASFPVTRKSNDITSIASNGGRVQ).

It belongs to the RuBisCO small chain family. Heterohexadecamer of 8 large and 8 small subunits.

The protein localises to the plastid. The protein resides in the chloroplast. Functionally, ruBisCO catalyzes two reactions: the carboxylation of D-ribulose 1,5-bisphosphate, the primary event in carbon dioxide fixation, as well as the oxidative fragmentation of the pentose substrate. Both reactions occur simultaneously and in competition at the same active site. Although the small subunit is not catalytic it is essential for maximal activity. In Amaranthus hypochondriacus (Prince-of-Wales feather), this protein is Ribulose bisphosphate carboxylase small subunit, chloroplastic 2.